The primary structure comprises 62 residues: MTIAFQSAVFALIAISFLLVIGVPVALASPDGWSSSKNVVFSGVSLWIGSVLFVGILNSFIS.

Helical transmembrane passes span 8–28 (AVFALIAISFLLVIGVPVALA) and 41–61 (FSGVSLWIGSVLFVGILNSFI).

The protein belongs to the PsbZ family. PSII is composed of 1 copy each of membrane proteins PsbA, PsbB, PsbC, PsbD, PsbE, PsbF, PsbH, PsbI, PsbJ, PsbK, PsbL, PsbM, PsbT, PsbY, PsbZ, Psb30/Ycf12, at least 3 peripheral proteins of the oxygen-evolving complex and a large number of cofactors. It forms dimeric complexes.

The protein localises to the plastid. It is found in the chloroplast thylakoid membrane. May control the interaction of photosystem II (PSII) cores with the light-harvesting antenna, regulates electron flow through the 2 photosystem reaction centers. PSII is a light-driven water plastoquinone oxidoreductase, using light energy to abstract electrons from H(2)O, generating a proton gradient subsequently used for ATP formation. The protein is Photosystem II reaction center protein Z of Pinus thunbergii (Japanese black pine).